The sequence spans 218 residues: MSENEIKGILGTKLGMTQIFDEENRVIPVTVVEAGPCVVSQIRTVETDGYNAIQIAYGEIDPRKVNQPLTGHFKKAGVTPRRHVTEIRMDDVSGYEVGQDVTVEIFNDVKFVDVTGTSKGKGYAGAMKRHGFAGQGAGHGNQAAHRRVGGIGAAATPGRIFKGKRMAGRMGNDRVTTQNLKVQKIDADANLILIKGAIPGNRGGIVTVKTAVKGGAHA.

The protein belongs to the universal ribosomal protein uL3 family. As to quaternary structure, part of the 50S ribosomal subunit. Forms a cluster with proteins L14 and L19.

Its function is as follows. One of the primary rRNA binding proteins, it binds directly near the 3'-end of the 23S rRNA, where it nucleates assembly of the 50S subunit. The polypeptide is Large ribosomal subunit protein uL3 (Corynebacterium efficiens (strain DSM 44549 / YS-314 / AJ 12310 / JCM 11189 / NBRC 100395)).